Consider the following 389-residue polypeptide: Sedoheptulose-1,7-bisphosphatase, chloroplastic (389 aa).

An intrachain disulfide couples cysteine 115 to cysteine 120. Residues aspartate 126, glutamate 155, aspartate 173, leucine 175, and aspartate 176 each contribute to the Mg(2+) site. Substrate is bound by residues 176–179, tyrosine 287, and lysine 317; that span reads DGSS. Mg(2+) is bound at residue glutamate 323.

Belongs to the FBPase class 1 family. Homodimer. Mg(2+) serves as cofactor.

Its subcellular location is the plastid. It is found in the chloroplast. It carries out the reaction D-sedoheptulose 1,7-bisphosphate + H2O = D-sedoheptulose 7-phosphate + phosphate. It participates in carbohydrate biosynthesis; Calvin cycle. In Chlamydomonas reinhardtii (Chlamydomonas smithii), this protein is Sedoheptulose-1,7-bisphosphatase, chloroplastic (CSBP).